A 284-amino-acid chain; its full sequence is Homeobox protein Hox-D13 (284 aa).

Positions 217–276 form a DNA-binding region, homeobox; sequence GRKKRVPYTKTQLKELEREYATNKFITKEKRRRISTATNLTERQVTIWFQNRRVKEKKVV.

It belongs to the Abd-B homeobox family.

It localises to the nucleus. Functionally, sequence-specific transcription factor that binds gene promoters and activates their transcription. Part of a developmental regulatory system that provides cells with specific positional identities on the anterior-posterior axis. This Heterodontus francisci (Horn shark) protein is Homeobox protein Hox-D13 (HOXD13).